The sequence spans 400 residues: Dihydrolipoyllysine-residue succinyltransferase component of 2-oxoglutarate dehydrogenase complex (400 aa).

The Lipoyl-binding domain occupies 2-77; that stretch reads GVKIIVPSLG…AVGEEIGDIN (76 aa). At K43 the chain carries N6-lipoyllysine. A compositionally biased stretch (polar residues) spans 85–97; it reads NSNEAAKPQTASQ. The segment at 85–113 is disordered; sequence NSNEAAKPQTASQPVPEKVPKKPAVANNT. The Peripheral subunit-binding (PSBD) domain maps to 113-150; sequence TLAPSVQKLVTENKLDPNNIKGTGKDGRITKGDVLETM. Residues H371 and D375 contribute to the active site.

It belongs to the 2-oxoacid dehydrogenase family. In terms of assembly, forms a 24-polypeptide structural core with octahedral symmetry. Part of the 2-oxoglutarate dehydrogenase (OGDH) complex composed of E1 (2-oxoglutarate dehydrogenase), E2 (dihydrolipoamide succinyltransferase) and E3 (dihydrolipoamide dehydrogenase); the complex contains multiple copies of the three enzymatic components (E1, E2 and E3). (R)-lipoate is required as a cofactor.

The catalysed reaction is N(6)-[(R)-dihydrolipoyl]-L-lysyl-[protein] + succinyl-CoA = N(6)-[(R)-S(8)-succinyldihydrolipoyl]-L-lysyl-[protein] + CoA. Its pathway is amino-acid degradation; L-lysine degradation via saccharopine pathway; glutaryl-CoA from L-lysine: step 6/6. In terms of biological role, E2 component of the 2-oxoglutarate dehydrogenase (OGDH) complex which catalyzes the second step in the conversion of 2-oxoglutarate to succinyl-CoA and CO(2). The sequence is that of Dihydrolipoyllysine-residue succinyltransferase component of 2-oxoglutarate dehydrogenase complex (sucB) from Rickettsia bellii (strain RML369-C).